A 210-amino-acid chain; its full sequence is Urease accessory protein UreG (210 aa).

15 to 22 (GPVGSGKT) serves as a coordination point for GTP.

It belongs to the SIMIBI class G3E GTPase family. UreG subfamily. In terms of assembly, homodimer. UreD, UreF and UreG form a complex that acts as a GTP-hydrolysis-dependent molecular chaperone, activating the urease apoprotein by helping to assemble the nickel containing metallocenter of UreC. The UreE protein probably delivers the nickel.

Its subcellular location is the cytoplasm. Its function is as follows. Facilitates the functional incorporation of the urease nickel metallocenter. This process requires GTP hydrolysis, probably effectuated by UreG. The protein is Urease accessory protein UreG of Ralstonia nicotianae (strain ATCC BAA-1114 / GMI1000) (Ralstonia solanacearum).